Consider the following 389-residue polypeptide: Nucleic acid dioxygenase ALKBH1 (389 aa).

Positions 86–389 (SKWQAYGLKG…VKRARINPDS (304 aa)) are tRNA-binding. Residues Trp-144 and 175-177 (YHY) contribute to the substrate site. The Fe2OG dioxygenase domain occupies 208–347 (GFEDFRAEAG…RVNMTVRQVL (140 aa)). 220–222 (NYY) is a binding site for 2-oxoglutarate. The Fe cation site is built by His-231, Asp-233, and His-287. Asp-233 contributes to the substrate binding site. 338-344 (RVNMTVR) is a binding site for 2-oxoglutarate.

The protein belongs to the alkB family. In terms of assembly, monomer. Interacts with DNAJB6. It depends on Fe(2+) as a cofactor. In terms of tissue distribution, ubiquitous.

The protein resides in the nucleus. The protein localises to the mitochondrion. It catalyses the reaction 2'-deoxyribonucleotide-(2'-deoxyribose 5'-phosphate)-2'-deoxyribonucleotide-DNA = a 3'-end 2'-deoxyribonucleotide-(2,3-dehydro-2,3-deoxyribose 5'-phosphate)-DNA + a 5'-end 5'-phospho-2'-deoxyribonucleoside-DNA + H(+). It carries out the reaction a methylated nucleobase within DNA + 2-oxoglutarate + O2 = a nucleobase within DNA + formaldehyde + succinate + CO2. The enzyme catalyses an N(6)-methyl-2'-deoxyadenosine in DNA + 2-oxoglutarate + O2 = a 2'-deoxyadenosine in DNA + formaldehyde + succinate + CO2. The catalysed reaction is an N(1)-methyladenosine in tRNA + 2-oxoglutarate + O2 = an adenosine in tRNA + formaldehyde + succinate + CO2. It catalyses the reaction 5-methylcytidine(34) in mitochondrial tRNA(Met) + 2 2-oxoglutarate + 2 O2 = 5-formylcytidine(34) in mitochondrial tRNA(Met) + 2 succinate + 2 CO2 + H2O. It carries out the reaction an N(3)-methylcytidine in mRNA + 2-oxoglutarate + O2 = a cytidine in mRNA + formaldehyde + succinate + CO2. The enzyme catalyses N(1)-methyladenosine(58) in tRNA + 2-oxoglutarate + O2 = adenosine(58) in tRNA + formaldehyde + succinate + CO2. Dioxygenase that acts on nucleic acids, such as DNA and tRNA. Requires molecular oxygen, alpha-ketoglutarate and iron. A number of activities have been described for this dioxygenase, but recent results suggest that it mainly acts on tRNAs and mediates their demethylation or oxidation depending on the context and subcellular compartment. Mainly acts as a tRNA demethylase by removing N(1)-methyladenine from various tRNAs, with a preference for N(1)-methyladenine at position 58 (m1A58) present on a stem loop structure of tRNAs. Acts as a regulator of translation initiation and elongation in response to glucose deprivation: regulates both translation initiation, by mediating demethylation of tRNA(Met), and translation elongation, N(1)-methyladenine-containing tRNAs being preferentially recruited to polysomes to promote translation elongation. In mitochondrion, specifically interacts with mt-tRNA(Met) and mediates oxidation of mt-tRNA(Met) methylated at cytosine(34) to form 5-formylcytosine (f(5)c) at this position. mt-tRNA(Met) containing the f(5)c modification at the wobble position enables recognition of the AUA codon in addition to the AUG codon, expanding codon recognition in mitochondrial translation. Specifically demethylates DNA methylated on the 6th position of adenine (N(6)-methyladenosine) DNA. N(6)-methyladenosine (m6A) DNA is present at some L1 elements in embryonic stem cells and probably promotes their silencing. Demethylates mRNAs containing N(3)-methylcytidine modification. Also able to repair alkylated single-stranded DNA by oxidative demethylation, but with low activity. Also has DNA lyase activity and introduces double-stranded breaks at abasic sites: cleaves both single-stranded DNA and double-stranded DNA at abasic sites, with the greatest activity towards double-stranded DNA with two abasic sites. DNA lyase activity does not require alpha-ketoglutarate and iron and leads to the formation of an irreversible covalent protein-DNA adduct with the 5' DNA product. DNA lyase activity is not required during base excision repair and class switch recombination of the immunoglobulin heavy chain during B lymphocyte activation. May play a role in placental trophoblast lineage differentiation. The protein is Nucleic acid dioxygenase ALKBH1 of Homo sapiens (Human).